The chain runs to 147 residues: MKVILVKDVKNVGKAGEVVNVSDGYGRNYLIPKGLAIEATESNLKMLNEKKKAEERKRQQELEQAKELAQKLSKVGVTLKVKAGENGKLFGSVTSKDVEEALKEKGFEIDKKKIVLPENIKTTGTYYAEIKLYQGVTAKVQVDVVAE.

It belongs to the bacterial ribosomal protein bL9 family.

Its function is as follows. Binds to the 23S rRNA. The polypeptide is Large ribosomal subunit protein bL9 (Caldanaerobacter subterraneus subsp. tengcongensis (strain DSM 15242 / JCM 11007 / NBRC 100824 / MB4) (Thermoanaerobacter tengcongensis)).